A 743-amino-acid chain; its full sequence is DNA ligase 2 (743 aa).

NAD(+) contacts are provided by residues 45-49, 94-95, and E125; these read DADFD and SL. K127 acts as the N6-AMP-lysine intermediate in catalysis. NAD(+)-binding residues include R148, E185, K301, and K325. Zn(2+) contacts are provided by C419, C422, C438, and C444. A BRCT domain is found at 639–728; that stretch reads EGPRPLEGLT…PERAKEAALP (90 aa). Residues 720–743 are disordered; sequence ERAKEAALPVPEAAPAADPENSGE. Over residues 725–743 the composition is skewed to low complexity; it reads AALPVPEAAPAADPENSGE.

Belongs to the NAD-dependent DNA ligase family. LigA subfamily. Requires Mg(2+) as cofactor. Mn(2+) serves as cofactor.

The catalysed reaction is NAD(+) + (deoxyribonucleotide)n-3'-hydroxyl + 5'-phospho-(deoxyribonucleotide)m = (deoxyribonucleotide)n+m + AMP + beta-nicotinamide D-nucleotide.. DNA ligase that catalyzes the formation of phosphodiester linkages between 5'-phosphoryl and 3'-hydroxyl groups in double-stranded DNA using NAD as a coenzyme and as the energy source for the reaction. It is essential for DNA replication and repair of damaged DNA. This Streptomyces griseus subsp. griseus (strain JCM 4626 / CBS 651.72 / NBRC 13350 / KCC S-0626 / ISP 5235) protein is DNA ligase 2.